The primary structure comprises 438 residues: MSQANAATKASSDVFFNASLEDIDPEIFGAIRNELGRQRHEIELIASENIVSRAVLEAQGSILTNKYAEGYPGKRYYGGCQYVDVVEELAIERAKKLFGAEFANVQPNSGSQMNQAVFLALLQPGDTFMGLDLNSGGHLTHGSPVNMSGKWFNVVSYGVRKDDHLLDMDEVARLARENKPKLILAGGTAYSRIWDWKRFREIADEVGAYLMVDMAHIAGLVAGGQHPSPVPHAHVCTTTTHKSLRGPRGGMILTNDADIAKKINSAVFPGLQGGPLMHVIAGKAVAFAEALKPEFKLYAKNVVDNARALAEELKSHGLDIVSGGTDNHLMLVDLRPKNATGKRAEAALGRANITCNKNGIPFDPEKPFVTSGVRLGTPAGTTRGFGVAEFKEIGSLIAEVLDGLKVANSDEGNAAVEQAVKEKVIALTGRFPMYGYQG.

Residues L133 and 137–139 (GHL) contribute to the (6S)-5,6,7,8-tetrahydrofolate site. K242 carries the N6-(pyridoxal phosphate)lysine modification.

The protein belongs to the SHMT family. As to quaternary structure, homodimer. It depends on pyridoxal 5'-phosphate as a cofactor.

The protein resides in the cytoplasm. The enzyme catalyses (6R)-5,10-methylene-5,6,7,8-tetrahydrofolate + glycine + H2O = (6S)-5,6,7,8-tetrahydrofolate + L-serine. It functions in the pathway one-carbon metabolism; tetrahydrofolate interconversion. The protein operates within amino-acid biosynthesis; glycine biosynthesis; glycine from L-serine: step 1/1. In terms of biological role, catalyzes the reversible interconversion of serine and glycine with tetrahydrofolate (THF) serving as the one-carbon carrier. This reaction serves as the major source of one-carbon groups required for the biosynthesis of purines, thymidylate, methionine, and other important biomolecules. Also exhibits THF-independent aldolase activity toward beta-hydroxyamino acids, producing glycine and aldehydes, via a retro-aldol mechanism. This is Serine hydroxymethyltransferase from Brucella melitensis biotype 2 (strain ATCC 23457).